We begin with the raw amino-acid sequence, 320 residues long: Ferrochelatase (320 aa).

Fe cation is bound by residues H194 and E275.

The protein belongs to the ferrochelatase family. In terms of assembly, monomer.

It localises to the cytoplasm. It catalyses the reaction heme b + 2 H(+) = protoporphyrin IX + Fe(2+). The protein operates within porphyrin-containing compound metabolism; protoheme biosynthesis; protoheme from protoporphyrin-IX: step 1/1. Functionally, catalyzes the ferrous insertion into protoporphyrin IX. In Salmonella schwarzengrund (strain CVM19633), this protein is Ferrochelatase.